The primary structure comprises 370 residues: Aminomethyltransferase (370 aa).

The protein belongs to the GcvT family. In terms of assembly, the glycine cleavage system is composed of four proteins: P, T, L and H.

The enzyme catalyses N(6)-[(R)-S(8)-aminomethyldihydrolipoyl]-L-lysyl-[protein] + (6S)-5,6,7,8-tetrahydrofolate = N(6)-[(R)-dihydrolipoyl]-L-lysyl-[protein] + (6R)-5,10-methylene-5,6,7,8-tetrahydrofolate + NH4(+). The glycine cleavage system catalyzes the degradation of glycine. This chain is Aminomethyltransferase, found in Clostridium botulinum (strain Loch Maree / Type A3).